The sequence spans 329 residues: Beta-ribofuranosylphenol 5'-phosphate synthase (329 aa).

This sequence belongs to the beta-RFA-P synthase family. In terms of assembly, homodimer. It depends on Mg(2+) as a cofactor.

It catalyses the reaction 5-phospho-alpha-D-ribose 1-diphosphate + 4-hydroxybenzoate + H(+) = 4-(beta-D-ribofuranosyl)phenol 5'-phosphate + CO2 + diphosphate. The enzyme catalyses 4-aminobenzoate + 5-phospho-alpha-D-ribose 1-diphosphate + H(+) = 4-(beta-D-ribofuranosyl)aminobenzene 5'-phosphate + CO2 + diphosphate. The protein operates within cofactor biosynthesis; 5,6,7,8-tetrahydromethanopterin biosynthesis. In terms of biological role, catalyzes the condensation of 4-hydroxybenzoate (HB) with 5-phospho-alpha-D-ribose 1-diphosphate (PRPP) to produce beta-ribofuranosylphenol 5'-phosphate (beta-RFH-P). Also catalyzes the condensation of 4-aminobenzoate (pABA) with PRPP to produce beta-ribofuranosylaminobenzene 5'-phosphate (beta-RFA-P). Only 4-hydroxybenzoate is known to be biosynthesized by methanogenic archaea, but 4-aminobenzoate can be used as substrate by growing methanogens when it is present in the growth medium. The chain is Beta-ribofuranosylphenol 5'-phosphate synthase from Methanothermobacter thermautotrophicus (strain ATCC 29096 / DSM 1053 / JCM 10044 / NBRC 100330 / Delta H) (Methanobacterium thermoautotrophicum).